The chain runs to 539 residues: Phosphatidylinositol 4-phosphate 5-kinase type-1 beta (539 aa).

Residues 1–21 (MSSTAENGDAVPGKQNEEKTY) form a disordered region. Positions 25–395 (ASSAIKGAIQ…RFLKFMNSRV (371 aa)) constitute a PIPK domain. Residues Ser-445, Ser-447, and Ser-448 each carry the phosphoserine modification.

In terms of assembly, interacts with RAC1, AJUBA, PLD1, PLD2 and ARF1.

Its subcellular location is the cytoplasm. It is found in the cytosol. The protein resides in the cell membrane. The protein localises to the endomembrane system. It catalyses the reaction a 1,2-diacyl-sn-glycero-3-phospho-(1D-myo-inositol 4-phosphate) + ATP = a 1,2-diacyl-sn-glycero-3-phospho-(1D-myo-inositol-4,5-bisphosphate) + ADP + H(+). The catalysed reaction is 1-octadecanoyl-2-(5Z,8Z,11Z,14Z)-eicosatetraenoyl-sn-glycero-3-phospho-1D-myo-inositol 4-phosphate + ATP = 1-octadecanoyl-2-(5Z,8Z,11Z,14Z)-eicosatetraenoyl-sn-glycero-3-phospho-1D-myo-inositol 4,5-bisphosphate + ADP + H(+). It carries out the reaction 1-octadecanoyl-2-(9Z)-octadecenoyl-sn-glycero-3-phospho-1D-myo-inositol 4-phosphate + ATP = 1-octadecanoyl-2-(9Z)-octadecenoyl-sn-glycero-3-phospho-1D-myo-inositol 4,5-bisphosphate + ADP + H(+). The enzyme catalyses 1-octadecanoyl-2-(9Z)-octadecenoyl-sn-glycero-3-phospho-1D-myo-inositol + ATP = 1-octadecanoyl-2-(9Z)-octadecenoyl-sn-glycero-3-phospho-1D-myo-inositol 5-phosphate + ADP + H(+). It catalyses the reaction 1-octadecanoyl-2-(9Z,12Z)-octadecadienoyl-sn-glycero-3-phospho-1D-myo-inositol + ATP = 1-octadecanoyl-2-(9Z,12Z)-octadecadienoyl-sn-glycero-3-phospho-1D-myo-inositol 5-phosphate + ADP + H(+). The catalysed reaction is 1-octadecanoyl-2-(5Z,8Z,11Z,14Z-eicosatetraenoyl)-sn-glycero-3-phospho-(1D-myo-inositol) + ATP = 1-octadecanoyl-2-(5Z,8Z,11Z,14Z)-eicosatetraenoyl-sn-glycero-3-phospho-1D-myo-inositol 5-phosphate + ADP + H(+). It carries out the reaction 1,2-di-(9Z,12Z)-octadecadienoyl-sn-glycero-3-phospho-1D-myo-inositol + ATP = 1,2-di(9Z,12Z)-octadecadienoyl-sn-glycero-3-phospho-1D-myo-inositol 5-phosphate + ADP + H(+). In terms of biological role, catalyzes the phosphorylation of phosphatidylinositol 4-phosphate (PtdIns(4)P/PI4P) to form phosphatidylinositol 4,5-bisphosphate (PtdIns(4,5)P2/PIP2), a lipid second messenger that regulates several cellular processes such as signal transduction, vesicle trafficking, actin cytoskeleton dynamics, cell adhesion, and cell motility. PtdIns(4,5)P2 can directly act as a second messenger or can be utilized as a precursor to generate other second messengers: inositol 1,4,5-trisphosphate (IP3), diacylglycerol (DAG) or phosphatidylinositol-3,4,5-trisphosphate (PtdIns(3,4,5)P3/PIP3). Mediates RAC1-dependent reorganization of actin filaments. Contributes to the activation of phospholipase PLD2. Together with PIP5K1A, is required, after stimulation by G-protein coupled receptors, for the synthesis of IP3 that will induce stable platelet adhesion. This is Phosphatidylinositol 4-phosphate 5-kinase type-1 beta from Rattus norvegicus (Rat).